A 485-amino-acid chain; its full sequence is Glutamyl-tRNA(Gln) amidotransferase subunit A (485 aa).

Active-site charge relay system residues include lysine 78 and serine 153. The active-site Acyl-ester intermediate is the serine 177.

Belongs to the amidase family. GatA subfamily. As to quaternary structure, heterotrimer of A, B and C subunits.

The catalysed reaction is L-glutamyl-tRNA(Gln) + L-glutamine + ATP + H2O = L-glutaminyl-tRNA(Gln) + L-glutamate + ADP + phosphate + H(+). In terms of biological role, allows the formation of correctly charged Gln-tRNA(Gln) through the transamidation of misacylated Glu-tRNA(Gln) in organisms which lack glutaminyl-tRNA synthetase. The reaction takes place in the presence of glutamine and ATP through an activated gamma-phospho-Glu-tRNA(Gln). The protein is Glutamyl-tRNA(Gln) amidotransferase subunit A of Bacillus cereus (strain ZK / E33L).